The following is a 425-amino-acid chain: Serine/threonine transporter SstT (425 aa).

The next 9 helical transmembrane spans lie at 11–31 (FLNG…LILA), 43–63 (FLGS…VFVL), 91–111 (LFAA…LVLV), 141–161 (ALVS…GFAL), 182–202 (IVHL…AGTI), 216–236 (LLAV…PIIV), 290–310 (IPLG…VLTL), 316–336 (LGIE…AVSA), and 363–383 (VAMQ…SAET).

It belongs to the dicarboxylate/amino acid:cation symporter (DAACS) (TC 2.A.23) family.

It is found in the cell inner membrane. It catalyses the reaction L-serine(in) + Na(+)(in) = L-serine(out) + Na(+)(out). The catalysed reaction is L-threonine(in) + Na(+)(in) = L-threonine(out) + Na(+)(out). Its function is as follows. Involved in the import of serine and threonine into the cell, with the concomitant import of sodium (symport system). The chain is Serine/threonine transporter SstT from Psychromonas ingrahamii (strain DSM 17664 / CCUG 51855 / 37).